A 151-amino-acid chain; its full sequence is Large ribosomal subunit protein uL13 (151 aa).

The protein belongs to the universal ribosomal protein uL13 family. Part of the 50S ribosomal subunit.

In terms of biological role, this protein is one of the early assembly proteins of the 50S ribosomal subunit, although it is not seen to bind rRNA by itself. It is important during the early stages of 50S assembly. In Microchaete diplosiphon (Fremyella diplosiphon), this protein is Large ribosomal subunit protein uL13.